Consider the following 819-residue polypeptide: Leucine--tRNA ligase (819 aa).

The 'HIGH' region motif lies at 42 to 52; the sequence is PYPSGRLHMGH. Residues 577-581 carry the 'KMSKS' region motif; it reads KMSKS. Lysine 580 contacts ATP.

This sequence belongs to the class-I aminoacyl-tRNA synthetase family.

Its subcellular location is the cytoplasm. The catalysed reaction is tRNA(Leu) + L-leucine + ATP = L-leucyl-tRNA(Leu) + AMP + diphosphate. The protein is Leucine--tRNA ligase of Saccharophagus degradans (strain 2-40 / ATCC 43961 / DSM 17024).